The primary structure comprises 344 residues: Methionine aminopeptidase 1C, chloroplastic/mitochondrial (344 aa).

Histidine 172 serves as a coordination point for substrate. A divalent metal cation contacts are provided by aspartate 189, aspartate 200, and histidine 262. Histidine 269 contributes to the substrate binding site. 2 residues coordinate a divalent metal cation: glutamate 296 and glutamate 327.

It belongs to the peptidase M24A family. Methionine aminopeptidase type 1 subfamily. Co(2+) is required as a cofactor. It depends on Zn(2+) as a cofactor. The cofactor is Mn(2+). Fe(2+) serves as cofactor. Ubiquitous.

It is found in the plastid. The protein localises to the chloroplast. Its subcellular location is the mitochondrion. It catalyses the reaction Release of N-terminal amino acids, preferentially methionine, from peptides and arylamides.. Functionally, removes the N-terminal methionine from nascent proteins. The N-terminal methionine is often cleaved when the second residue in the primary sequence is small and uncharged (Met-Ala-, Cys, Gly, Pro, Ser, Thr, or Val). The protein is Methionine aminopeptidase 1C, chloroplastic/mitochondrial (MAP1C) of Arabidopsis thaliana (Mouse-ear cress).